Consider the following 225-residue polypeptide: Peptidyl-tRNA hydrolase (225 aa).

Tyr-14 serves as a coordination point for tRNA. His-19 functions as the Proton acceptor in the catalytic mechanism. TRNA contacts are provided by Phe-64, Asn-66, and Asn-112. Residues 187–225 are disordered; that stretch reads MQPPKPEKPKGEAKPAAPEAPEAAPDTRSALQRLADRFR. Residues 200–210 show a composition bias toward low complexity; that stretch reads KPAAPEAPEAA.

The protein belongs to the PTH family. In terms of assembly, monomer.

It localises to the cytoplasm. It catalyses the reaction an N-acyl-L-alpha-aminoacyl-tRNA + H2O = an N-acyl-L-amino acid + a tRNA + H(+). In terms of biological role, hydrolyzes ribosome-free peptidyl-tRNAs (with 1 or more amino acids incorporated), which drop off the ribosome during protein synthesis, or as a result of ribosome stalling. Functionally, catalyzes the release of premature peptidyl moieties from peptidyl-tRNA molecules trapped in stalled 50S ribosomal subunits, and thus maintains levels of free tRNAs and 50S ribosomes. This Cereibacter sphaeroides (strain ATCC 17025 / ATH 2.4.3) (Rhodobacter sphaeroides) protein is Peptidyl-tRNA hydrolase.